Consider the following 409-residue polypeptide: Elongation factor Tu, chloroplastic (409 aa).

The tr-type G domain occupies 10-214 (KPHVNIGTIG…AVDAYIPTPE (205 aa)). Residues 19 to 26 (GHVDHGKT) are G1. Residue 19-26 (GHVDHGKT) coordinates GTP. Mg(2+) is bound at residue threonine 26. The tract at residues 60 to 64 (GITIN) is G2. The tract at residues 81–84 (DCPG) is G3. GTP is bound by residues 81-85 (DCPGH) and 136-139 (NKQD). A G4 region spans residues 136–139 (NKQD). Residues 174-176 (SAL) are G5.

It belongs to the TRAFAC class translation factor GTPase superfamily. Classic translation factor GTPase family. EF-Tu/EF-1A subfamily.

The protein localises to the plastid. Its subcellular location is the chloroplast. The catalysed reaction is GTP + H2O = GDP + phosphate + H(+). Its function is as follows. GTP hydrolase that promotes the GTP-dependent binding of aminoacyl-tRNA to the A-site of ribosomes during protein biosynthesis. The protein is Elongation factor Tu, chloroplastic (tufA) of Thalassiosira pseudonana (Marine diatom).